A 586-amino-acid chain; its full sequence is Eukaryotic translation initiation factor 3 subunit D (586 aa).

2 disordered regions span residues Glu-16 to Phe-37 and Lys-104 to Ser-176. Positions Gly-108 to Ala-131 are enriched in gly residues. Residues Gly-162–Glu-174 are compositionally biased toward basic and acidic residues. The interval Ser-301 to Pro-315 is RNA gate. Residues Ala-563–Glu-586 are disordered. Residues Phe-566–Glu-577 are compositionally biased toward acidic residues.

Belongs to the eIF-3 subunit D family. In terms of assembly, component of the eukaryotic translation initiation factor 3 (eIF-3) complex.

It is found in the cytoplasm. Functionally, mRNA cap-binding component of the eukaryotic translation initiation factor 3 (eIF-3) complex, which is involved in protein synthesis of a specialized repertoire of mRNAs and, together with other initiation factors, stimulates binding of mRNA and methionyl-tRNAi to the 40S ribosome. The eIF-3 complex specifically targets and initiates translation of a subset of mRNAs involved in cell proliferation. In the eIF-3 complex, eif3d specifically recognizes and binds the 7-methylguanosine cap of a subset of mRNAs. The polypeptide is Eukaryotic translation initiation factor 3 subunit D (Aspergillus clavatus (strain ATCC 1007 / CBS 513.65 / DSM 816 / NCTC 3887 / NRRL 1 / QM 1276 / 107)).